The following is a 388-amino-acid chain: Chorismate synthase (388 aa).

The NADP(+) site is built by Arg39 and Arg45. Residues 132-134 (RSS), 251-252 (NA), Gly296, 311-315 (KPIPT), and Arg337 contribute to the FMN site.

This sequence belongs to the chorismate synthase family. Homotetramer. The cofactor is FMNH2.

The catalysed reaction is 5-O-(1-carboxyvinyl)-3-phosphoshikimate = chorismate + phosphate. The protein operates within metabolic intermediate biosynthesis; chorismate biosynthesis; chorismate from D-erythrose 4-phosphate and phosphoenolpyruvate: step 7/7. Its function is as follows. Catalyzes the anti-1,4-elimination of the C-3 phosphate and the C-6 proR hydrogen from 5-enolpyruvylshikimate-3-phosphate (EPSP) to yield chorismate, which is the branch point compound that serves as the starting substrate for the three terminal pathways of aromatic amino acid biosynthesis. This reaction introduces a second double bond into the aromatic ring system. The polypeptide is Chorismate synthase (Staphylococcus aureus (strain MW2)).